We begin with the raw amino-acid sequence, 686 residues long: ATP-dependent DNA helicase RecG (686 aa).

The wedge domain stretch occupies residues 50-149 (TVIDLNQAED…GTQTQENADV (100 aa)). The Helicase ATP-binding domain occupies 279–439 (DLKAPIRMHR…VFGEMDVSSI (161 aa)). 292–299 (GDVGSGKT) provides a ligand contact to ATP. Residues 392-395 (DEQH) carry the DEAH box motif. The 157-residue stretch at 462 to 618 (VLMQMTSELK…GFELSERDLE (157 aa)) folds into the Helicase C-terminal domain.

The protein belongs to the helicase family. RecG subfamily. In terms of assembly, monomer.

It carries out the reaction Couples ATP hydrolysis with the unwinding of duplex DNA by translocating in the 3'-5' direction.. It catalyses the reaction ATP + H2O = ADP + phosphate + H(+). Its function is as follows. Plays a critical role in recombination and DNA repair. Helps process Holliday junction intermediates to mature products by catalyzing branch migration. Has replication fork regression activity, unwinds stalled or blocked replication forks to make a HJ that can be resolved. Has a DNA unwinding activity characteristic of a DNA helicase with 3'-5' polarity. The polypeptide is ATP-dependent DNA helicase RecG (Staphylococcus aureus (strain NCTC 8325 / PS 47)).